The chain runs to 126 residues: Fatty acid-binding protein 2, liver (126 aa).

Residues 54 to 56, 99 to 101, and Arg121 contribute to the cholate site; these read TPN and HIQ.

The protein belongs to the calycin superfamily. Fatty-acid binding protein (FABP) family.

The protein resides in the cytoplasm. Its function is as follows. Binds free fatty acids and their coenzyme A derivatives, bilirubin, and some other small molecules in the cytoplasm. May be involved in intracellular lipid transport. The specificity of axolotl L-FABP differs from that of LB-FABP. Binds 2 ligands per protein molecule. This Ambystoma mexicanum (Axolotl) protein is Fatty acid-binding protein 2, liver.